A 219-amino-acid polypeptide reads, in one-letter code: 2-hydroxy-3-keto-5-methylthiopentenyl-1-phosphate phosphatase (219 aa).

It belongs to the HAD-like hydrolase superfamily. MtnX family.

It carries out the reaction 2-hydroxy-5-methylsulfanyl-3-oxopent-1-enyl phosphate + H2O = 1,2-dihydroxy-5-(methylsulfanyl)pent-1-en-3-one + phosphate. It functions in the pathway amino-acid biosynthesis; L-methionine biosynthesis via salvage pathway; L-methionine from S-methyl-5-thio-alpha-D-ribose 1-phosphate: step 4/6. Functionally, dephosphorylates 2-hydroxy-3-keto-5-methylthiopentenyl-1-phosphate (HK-MTPenyl-1-P) yielding 1,2-dihydroxy-3-keto-5-methylthiopentene (DHK-MTPene). This Bacillus thuringiensis (strain Al Hakam) protein is 2-hydroxy-3-keto-5-methylthiopentenyl-1-phosphate phosphatase.